Here is a 215-residue protein sequence, read N- to C-terminus: Outer-membrane lipoprotein LolB (215 aa).

The first 21 residues, 1 to 21 (MLIPKKYYLLIILLSNCLLAS), serve as a signal peptide directing secretion. A lipid anchor (N-palmitoyl cysteine) is attached at C22. C22 carries S-diacylglycerol cysteine lipidation.

This sequence belongs to the LolB family. Monomer.

Its subcellular location is the cell outer membrane. Plays a critical role in the incorporation of lipoproteins in the outer membrane after they are released by the LolA protein. The protein is Outer-membrane lipoprotein LolB of Baumannia cicadellinicola subsp. Homalodisca coagulata.